A 530-amino-acid polypeptide reads, in one-letter code: Synembryn-like chaperone C3E7.04c (530 aa).

A helical membrane pass occupies residues 492–512; that stretch reads SFIYHCYHSFVGPIHILLLMF.

This sequence belongs to the synembryn family.

It is found in the membrane. Its function is as follows. Chaperone that specifically binds and folds some, but not all, nascent G alpha proteins prior to G protein heterotrimer formation, promoting their stability and activity. Also acts as a guanine nucleotide exchange factor (GEF) for G alpha proteins by stimulating exchange of bound GDP for free GTP. The chain is Synembryn-like chaperone C3E7.04c from Schizosaccharomyces pombe (strain 972 / ATCC 24843) (Fission yeast).